Here is a 318-residue protein sequence, read N- to C-terminus: Thymidylate synthase (318 aa).

Residues Arg-25 and 180–181 contribute to the dUMP site; that span reads RR. Cys-200 (nucleophile) is an active-site residue. DUMP contacts are provided by residues 220 to 223, Asn-231, and 261 to 263; these read RSGD and HIY. Asp-223 contributes to the (6R)-5,10-methylene-5,6,7,8-tetrahydrofolate binding site. Residue Ala-317 participates in (6R)-5,10-methylene-5,6,7,8-tetrahydrofolate binding.

It belongs to the thymidylate synthase family. Bacterial-type ThyA subfamily. Homodimer.

The protein localises to the cytoplasm. It catalyses the reaction dUMP + (6R)-5,10-methylene-5,6,7,8-tetrahydrofolate = 7,8-dihydrofolate + dTMP. It participates in pyrimidine metabolism; dTTP biosynthesis. Functionally, catalyzes the reductive methylation of 2'-deoxyuridine-5'-monophosphate (dUMP) to 2'-deoxythymidine-5'-monophosphate (dTMP) while utilizing 5,10-methylenetetrahydrofolate (mTHF) as the methyl donor and reductant in the reaction, yielding dihydrofolate (DHF) as a by-product. This enzymatic reaction provides an intracellular de novo source of dTMP, an essential precursor for DNA biosynthesis. The protein is Thymidylate synthase of Lactobacillus johnsonii (strain CNCM I-12250 / La1 / NCC 533).